The primary structure comprises 131 residues: Aspartate 1-decarboxylase (131 aa).

Serine 25 serves as the catalytic Schiff-base intermediate with substrate; via pyruvic acid. Serine 25 is modified (pyruvic acid (Ser)). Residue threonine 57 participates in substrate binding. Catalysis depends on tyrosine 58, which acts as the Proton donor. 73–75 contacts substrate; it reads GAA.

This sequence belongs to the PanD family. In terms of assembly, heterooctamer of four alpha and four beta subunits. The cofactor is pyruvate. Post-translationally, is synthesized initially as an inactive proenzyme, which is activated by self-cleavage at a specific serine bond to produce a beta-subunit with a hydroxyl group at its C-terminus and an alpha-subunit with a pyruvoyl group at its N-terminus.

It localises to the cytoplasm. It catalyses the reaction L-aspartate + H(+) = beta-alanine + CO2. Its pathway is cofactor biosynthesis; (R)-pantothenate biosynthesis; beta-alanine from L-aspartate: step 1/1. Catalyzes the pyruvoyl-dependent decarboxylation of aspartate to produce beta-alanine. The polypeptide is Aspartate 1-decarboxylase (Acaryochloris marina (strain MBIC 11017)).